Here is a 390-residue protein sequence, read N- to C-terminus: Formate-dependent phosphoribosylglycinamide formyltransferase (390 aa).

Residues glutamate 18 to leucine 19 and glutamate 78 contribute to the N(1)-(5-phospho-beta-D-ribosyl)glycinamide site. Residues arginine 110, lysine 151, serine 156–glutamine 161, glutamate 191–leucine 194, and glutamate 199 each bind ATP. Residues aspartate 115–leucine 305 enclose the ATP-grasp domain. Positions 264 and 276 each coordinate Mg(2+). Residues aspartate 283, lysine 353, and arginine 360–arginine 361 each bind N(1)-(5-phospho-beta-D-ribosyl)glycinamide.

It belongs to the PurK/PurT family. Homodimer.

It catalyses the reaction N(1)-(5-phospho-beta-D-ribosyl)glycinamide + formate + ATP = N(2)-formyl-N(1)-(5-phospho-beta-D-ribosyl)glycinamide + ADP + phosphate + H(+). It functions in the pathway purine metabolism; IMP biosynthesis via de novo pathway; N(2)-formyl-N(1)-(5-phospho-D-ribosyl)glycinamide from N(1)-(5-phospho-D-ribosyl)glycinamide (formate route): step 1/1. Involved in the de novo purine biosynthesis. Catalyzes the transfer of formate to 5-phospho-ribosyl-glycinamide (GAR), producing 5-phospho-ribosyl-N-formylglycinamide (FGAR). Formate is provided by PurU via hydrolysis of 10-formyl-tetrahydrofolate. The chain is Formate-dependent phosphoribosylglycinamide formyltransferase from Prochlorococcus marinus subsp. pastoris (strain CCMP1986 / NIES-2087 / MED4).